The primary structure comprises 498 residues: ATP synthase subunit beta, chloroplastic (498 aa).

172 to 179 (GGAGVGKT) lines the ATP pocket.

The protein belongs to the ATPase alpha/beta chains family. In terms of assembly, F-type ATPases have 2 components, CF(1) - the catalytic core - and CF(0) - the membrane proton channel. CF(1) has five subunits: alpha(3), beta(3), gamma(1), delta(1), epsilon(1). CF(0) has four main subunits: a(1), b(1), b'(1) and c(9-12).

Its subcellular location is the plastid. The protein localises to the chloroplast thylakoid membrane. It carries out the reaction ATP + H2O + 4 H(+)(in) = ADP + phosphate + 5 H(+)(out). Produces ATP from ADP in the presence of a proton gradient across the membrane. The catalytic sites are hosted primarily by the beta subunits. The protein is ATP synthase subunit beta, chloroplastic of Magnolia tripetala (Umbrella-tree).